The chain runs to 244 residues: METQSEEQAVTKPADSGGEGGPPQVAGAQAARPEDRMTLLLRLRAQTKQQLLEYKSMVDANEEKTPEQIMQEKQIEAKIEELENEVEEAKTAFEMKKLALDRMQLSTALKKHLEKVDIKTSVLMDNMKQILNLNKLIMKSQQETWDLEEKLLDVRKKRLQLKQASERKLLEIQTEKNKQKDDLDSMENSDKIKAIQQNLETEIQITTVIQHVFQNLILGSKVNWAEDPALKETVLQLEKNLTMI.

Position 1 is an N-acetylmethionine (Met1). Residues 1 to 33 (METQSEEQAVTKPADSGGEGGPPQVAGAQAARP) are disordered. Ser16 carries the phosphoserine modification. The segment covering 22–31 (PPQVAGAQAA) has biased composition (low complexity). Residue Lys64 forms a Glycyl lysine isopeptide (Lys-Gly) (interchain with G-Cter in SUMO2) linkage. Thr65 bears the Phosphothreonine mark. Coiled-coil stretches lie at residues 66-104 (PEQI…DRMQ) and 146-189 (DLEE…MENS).

The protein belongs to the CENP-H/MCM16 family. Self-associates. Component of the CENPA-NAC complex, at least composed of CENPA, CENPC, CENPH, CENPM, CENPN, CENPT and CENPU. The CENPA-NAC complex interacts with the CENPA-CAD complex, composed of CENPI, CENPK, CENPL, CENPO, CENPP, CENPQ, CENPR and CENPS. Interacts with KIF2C and NDC80.

Its subcellular location is the nucleus. It is found in the chromosome. The protein localises to the centromere. It localises to the kinetochore. Component of the CENPA-NAC (nucleosome-associated) complex, a complex that plays a central role in assembly of kinetochore proteins, mitotic progression and chromosome segregation. The CENPA-NAC complex recruits the CENPA-CAD (nucleosome distal) complex and may be involved in incorporation of newly synthesized CENPA into centromeres. This is Centromere protein H (CENPH) from Bos taurus (Bovine).